We begin with the raw amino-acid sequence, 160 residues long: Probable chemoreceptor glutamine deamidase CheD 1 (160 aa).

The protein belongs to the CheD family.

It carries out the reaction L-glutaminyl-[protein] + H2O = L-glutamyl-[protein] + NH4(+). Functionally, probably deamidates glutamine residues to glutamate on methyl-accepting chemotaxis receptors (MCPs), playing an important role in chemotaxis. This Syntrophus aciditrophicus (strain SB) protein is Probable chemoreceptor glutamine deamidase CheD 1.